Here is a 340-residue protein sequence, read N- to C-terminus: Beta-ketoacyl-[acyl-carrier-protein] synthase III (340 aa).

Catalysis depends on residues Cys119 and His260. Residues 261 to 265 (QANYR) are ACP-binding. Asn290 is a catalytic residue.

The protein belongs to the thiolase-like superfamily. FabH family. As to quaternary structure, homodimer.

The protein localises to the cytoplasm. It carries out the reaction malonyl-[ACP] + acetyl-CoA + H(+) = 3-oxobutanoyl-[ACP] + CO2 + CoA. It functions in the pathway lipid metabolism; fatty acid biosynthesis. Its function is as follows. Catalyzes the condensation reaction of fatty acid synthesis by the addition to an acyl acceptor of two carbons from malonyl-ACP. Catalyzes the first condensation reaction which initiates fatty acid synthesis and may therefore play a role in governing the total rate of fatty acid production. Possesses both acetoacetyl-ACP synthase and acetyl transacylase activities. Its substrate specificity determines the biosynthesis of branched-chain and/or straight-chain of fatty acids. The polypeptide is Beta-ketoacyl-[acyl-carrier-protein] synthase III (Sulfurovum sp. (strain NBC37-1)).